The following is a 259-amino-acid chain: Phosphate import ATP-binding protein PstB (259 aa).

The region spanning 10–254 (AESRNLSFYY…PSRKETEDYI (245 aa)) is the ABC transporter domain. 43–50 (GPSGCGKS) contributes to the ATP binding site.

Belongs to the ABC transporter superfamily. Phosphate importer (TC 3.A.1.7) family. In terms of assembly, the complex is composed of two ATP-binding proteins (PstB), two transmembrane proteins (PstC and PstA) and a solute-binding protein (PstS).

Its subcellular location is the cell inner membrane. The enzyme catalyses phosphate(out) + ATP + H2O = ADP + 2 phosphate(in) + H(+). Its function is as follows. Part of the ABC transporter complex PstSACB involved in phosphate import. Responsible for energy coupling to the transport system. The chain is Phosphate import ATP-binding protein PstB from Methylobacillus flagellatus (strain ATCC 51484 / DSM 6875 / VKM B-1610 / KT).